A 609-amino-acid chain; its full sequence is Protein FRIGIDA (609 aa).

Positions 1–18 (MSNYPPTVAAQPTTTANP) are enriched in low complexity. The segment at 1-31 (MSNYPPTVAAQPTTTANPLLQRHQSEQRRRE) is disordered. 2 coiled-coil regions span residues 60–97 (DELA…LESN) and 409–440 (QIKE…LMEE). 2 disordered regions span residues 454-488 (RPRL…DDQD) and 587-609 (SEER…LDPK). The segment covering 474–484 (YRDRSFPSQRD) has biased composition (basic and acidic residues). The segment covering 594 to 609 (LSNQRSPRSNSSLDPK) has biased composition (polar residues).

Belongs to the Frigida family. Homodimer. Component of the transcription activator complex FRI-C composed of FRI, FRL1, SUF4, FLX and FES1. Interacts (via N-terminus) with FRL1 and (via C-terminus) with FLX (via N-terminus), SUF4 (via C-terminus) and FES1 (via C-terminus). Interacts with ASHH2 and RIN1, a component of the SWR1 chromatin-remodeling complex. Interacts with CBP20, FIP1 and FIP2. Expressed in ovules, but not in stamens.

The protein resides in the nucleus speckle. In terms of biological role, required for the regulation of flowering time in the late-flowering phenotype. Involved in the enrichment of a WDR5A-containing COMPASS-like complex at the 'FLOWERING LOCUS C' that trimethylates histone H3 'Lys-4', leading to FLC up-regulation and RNA levels increase. Variants with an early-flowering phenotype (Including cv. Columbia, cv. Landsberg Erecta and cv. Wassilewskija) show loss-of-function mutations of FRI. Able to delay flowering independently of FRL1 activity. Dispensable for the reactivation of FLC in early embryogenesis, but required to maintain high levels of FLC expression in later embryonic and vegetative development. Suppresses the repression of FLC by the autonomous pathway, but has no effect on the expression of the genes involved in this pathway. The sequence is that of Protein FRIGIDA from Arabidopsis thaliana (Mouse-ear cress).